A 125-amino-acid chain; its full sequence is Oxytocin-neurophysin 1 (125 aa).

The signal sequence occupies residues 1–19; that stretch reads MAGSSLACCLLGLLALTSA. Cysteine 20 and cysteine 25 form a disulfide bridge. Residue glycine 28 is modified to Glycine amide. Disulfide bonds link cysteine 41-cysteine 85, cysteine 44-cysteine 58, cysteine 52-cysteine 75, cysteine 59-cysteine 65, cysteine 92-cysteine 104, cysteine 98-cysteine 116, and cysteine 105-cysteine 110.

Belongs to the vasopressin/oxytocin family. As to quaternary structure, interacts with oxytocin receptor (Ki=1.5 nM). Interacts with vasopressin V1aR/AVPR1A (Ki=37 nM), V1bR/AVPR1B (Ki=222 nM), and V2R/AVPR2 receptors (Ki=823 nM).

Its subcellular location is the secreted. Neurophysin 1 specifically binds oxytocin. In terms of biological role, oxytocin causes contraction of the smooth muscle of the uterus and of the mammary gland. Acts by binding to oxytocin receptor (OXTR). The polypeptide is Oxytocin-neurophysin 1 (OXT) (Bos taurus (Bovine)).